We begin with the raw amino-acid sequence, 428 residues long: uncharacterized protein (428 aa).

Residues 241 to 351 enclose the Glutaredoxin domain; the sequence is KEEEEQSVGK…KLLGGCERVE (111 aa). Positions 386–401 are enriched in acidic residues; that stretch reads EDDDDDDDEGDDDESV. Residues 386–405 form a disordered region; it reads EDDDDDDDEGDDDESVKEER.

This is an uncharacterized protein from Arabidopsis thaliana (Mouse-ear cress).